The chain runs to 393 residues: S-adenosylmethionine synthase (393 aa).

Position 16 (His-16) interacts with ATP. Residue Asp-18 participates in Mg(2+) binding. A K(+)-binding site is contributed by Glu-44. Residues Glu-57 and Gln-100 each coordinate L-methionine. Positions 100 to 110 (QSQDIAQGVDK) are flexible loop. Residues 167-169 (DAK), 238-239 (RF), Asp-247, 253-254 (RK), Ala-270, and Lys-274 contribute to the ATP site. Position 247 (Asp-247) interacts with L-methionine. An L-methionine-binding site is contributed by Lys-278.

This sequence belongs to the AdoMet synthase family. As to quaternary structure, homotetramer; dimer of dimers. Mg(2+) serves as cofactor. The cofactor is K(+).

The protein localises to the cytoplasm. It catalyses the reaction L-methionine + ATP + H2O = S-adenosyl-L-methionine + phosphate + diphosphate. Its pathway is amino-acid biosynthesis; S-adenosyl-L-methionine biosynthesis; S-adenosyl-L-methionine from L-methionine: step 1/1. In terms of biological role, catalyzes the formation of S-adenosylmethionine (AdoMet) from methionine and ATP. The overall synthetic reaction is composed of two sequential steps, AdoMet formation and the subsequent tripolyphosphate hydrolysis which occurs prior to release of AdoMet from the enzyme. This Delftia acidovorans (strain DSM 14801 / SPH-1) protein is S-adenosylmethionine synthase.